Consider the following 253-residue polypeptide: tRNA pseudouridine synthase A (253 aa).

Aspartate 52 serves as the catalytic Nucleophile. Position 110 (tyrosine 110) interacts with substrate.

This sequence belongs to the tRNA pseudouridine synthase TruA family. Homodimer.

It carries out the reaction uridine(38/39/40) in tRNA = pseudouridine(38/39/40) in tRNA. Its function is as follows. Formation of pseudouridine at positions 38, 39 and 40 in the anticodon stem and loop of transfer RNAs. The protein is tRNA pseudouridine synthase A of Thermus thermophilus (strain ATCC BAA-163 / DSM 7039 / HB27).